A 463-amino-acid polypeptide reads, in one-letter code: Chromosomal replication initiator protein DnaA (463 aa).

The domain I, interacts with DnaA modulators stretch occupies residues 1 to 83 (MSTNQIILTD…LQLFQHYNNT (83 aa)). Residues 83-124 (TIKSIEIITKELPGTTQTVTELPTKTFADIGSSELNSENIFS) are domain II. The domain III, AAA+ region stretch occupies residues 125-343 (TLDVRFTFDN…GALNKVIAHS (219 aa)). The ATP site is built by glycine 171, glycine 173, lysine 174, and threonine 175. Positions 344–463 (NFTLKEITLE…IHLLMKILQN (120 aa)) are domain IV, binds dsDNA.

Belongs to the DnaA family. Oligomerizes as a right-handed, spiral filament on DNA at oriC.

Its subcellular location is the cytoplasm. Its function is as follows. Plays an essential role in the initiation and regulation of chromosomal replication. ATP-DnaA binds to the origin of replication (oriC) to initiate formation of the DNA replication initiation complex once per cell cycle. Binds the DnaA box (a 9 base pair repeat at the origin) and separates the double-stranded (ds)DNA. Forms a right-handed helical filament on oriC DNA; dsDNA binds to the exterior of the filament while single-stranded (ss)DNA is stabiized in the filament's interior. The ATP-DnaA-oriC complex binds and stabilizes one strand of the AT-rich DNA unwinding element (DUE), permitting loading of DNA polymerase. After initiation quickly degrades to an ADP-DnaA complex that is not apt for DNA replication. Binds acidic phospholipids. The protein is Chromosomal replication initiator protein DnaA of Rickettsia africae (strain ESF-5).